Here is a 185-residue protein sequence, read N- to C-terminus: Peptidyl-tRNA hydrolase (185 aa).

Tyr-14 contributes to the tRNA binding site. His-19 serves as the catalytic Proton acceptor. Residues Phe-64, Asn-66, and Asn-112 each coordinate tRNA.

This sequence belongs to the PTH family. As to quaternary structure, monomer.

The protein localises to the cytoplasm. The catalysed reaction is an N-acyl-L-alpha-aminoacyl-tRNA + H2O = an N-acyl-L-amino acid + a tRNA + H(+). Functionally, hydrolyzes ribosome-free peptidyl-tRNAs (with 1 or more amino acids incorporated), which drop off the ribosome during protein synthesis, or as a result of ribosome stalling. Catalyzes the release of premature peptidyl moieties from peptidyl-tRNA molecules trapped in stalled 50S ribosomal subunits, and thus maintains levels of free tRNAs and 50S ribosomes. The chain is Peptidyl-tRNA hydrolase from Alkaliphilus oremlandii (strain OhILAs) (Clostridium oremlandii (strain OhILAs)).